Here is a 442-residue protein sequence, read N- to C-terminus: UDP-N-acetylmuramoylalanine--D-glutamate ligase (442 aa).

ATP is bound at residue 115–121 (GSNGKST).

Belongs to the MurCDEF family.

The protein resides in the cytoplasm. The catalysed reaction is UDP-N-acetyl-alpha-D-muramoyl-L-alanine + D-glutamate + ATP = UDP-N-acetyl-alpha-D-muramoyl-L-alanyl-D-glutamate + ADP + phosphate + H(+). The protein operates within cell wall biogenesis; peptidoglycan biosynthesis. Functionally, cell wall formation. Catalyzes the addition of glutamate to the nucleotide precursor UDP-N-acetylmuramoyl-L-alanine (UMA). The protein is UDP-N-acetylmuramoylalanine--D-glutamate ligase of Aliivibrio salmonicida (strain LFI1238) (Vibrio salmonicida (strain LFI1238)).